A 216-amino-acid chain; its full sequence is Protein GrpE (216 aa).

Disordered regions lie at residues 1–45 (MTEE…LDPT) and 185–216 (RVAV…TEEV). Residues 205-216 (TDDEESGGTEEV) show a composition bias toward acidic residues.

Belongs to the GrpE family. In terms of assembly, homodimer.

It localises to the cytoplasm. In terms of biological role, participates actively in the response to hyperosmotic and heat shock by preventing the aggregation of stress-denatured proteins, in association with DnaK and GrpE. It is the nucleotide exchange factor for DnaK and may function as a thermosensor. Unfolded proteins bind initially to DnaJ; upon interaction with the DnaJ-bound protein, DnaK hydrolyzes its bound ATP, resulting in the formation of a stable complex. GrpE releases ADP from DnaK; ATP binding to DnaK triggers the release of the substrate protein, thus completing the reaction cycle. Several rounds of ATP-dependent interactions between DnaJ, DnaK and GrpE are required for fully efficient folding. The protein is Protein GrpE of Streptomyces griseus subsp. griseus (strain JCM 4626 / CBS 651.72 / NBRC 13350 / KCC S-0626 / ISP 5235).